A 396-amino-acid chain; its full sequence is S-adenosylmethionine synthase (396 aa).

Residue H14 participates in ATP binding. D16 serves as a coordination point for Mg(2+). Position 42 (E42) interacts with K(+). L-methionine contacts are provided by E55 and Q98. The tract at residues 98–108 is flexible loop; the sequence is QSPDIAMGVDK. ATP-binding positions include 174–176, 240–241, D249, 255–256, A272, and K276; these read DGK, RF, and RK. D249 contacts L-methionine. L-methionine is bound at residue K280.

The protein belongs to the AdoMet synthase family. As to quaternary structure, homotetramer; dimer of dimers. The cofactor is Mg(2+). K(+) serves as cofactor.

It is found in the cytoplasm. It catalyses the reaction L-methionine + ATP + H2O = S-adenosyl-L-methionine + phosphate + diphosphate. Its pathway is amino-acid biosynthesis; S-adenosyl-L-methionine biosynthesis; S-adenosyl-L-methionine from L-methionine: step 1/1. Functionally, catalyzes the formation of S-adenosylmethionine (AdoMet) from methionine and ATP. The overall synthetic reaction is composed of two sequential steps, AdoMet formation and the subsequent tripolyphosphate hydrolysis which occurs prior to release of AdoMet from the enzyme. This is S-adenosylmethionine synthase from Caldicellulosiruptor saccharolyticus (strain ATCC 43494 / DSM 8903 / Tp8T 6331).